Consider the following 275-residue polypeptide: UDP-Gal:alpha-D-GlcNAc-diphosphoundecaprenol beta-1,3-galactosyltransferase (275 aa).

Belongs to the glycosyltransferase 2 family. The cofactor is Mn(2+).

The protein resides in the cell inner membrane. It carries out the reaction N-acetyl-alpha-D-glucosaminyl-di-trans,octa-cis-undecaprenyl diphosphate + UDP-alpha-D-galactose = beta-D-Gal-(1-&gt;3)-alpha-D-GlcNAc-di-trans,octa-cis-undecaprenyl diphosphate + UDP + H(+). Its pathway is bacterial outer membrane biogenesis; LPS O-antigen biosynthesis. Its function is as follows. Catalyzes the addition of Gal, the second sugar moiety of the O7-antigen repeating unit, to GlcNAc-pyrophosphate-undecaprenol. In Escherichia coli, this protein is UDP-Gal:alpha-D-GlcNAc-diphosphoundecaprenol beta-1,3-galactosyltransferase (wbbD).